Consider the following 619-residue polypeptide: UvrABC system protein C (619 aa).

Residues 20–98 (TAPGVYRMYA…IKSLSPRYNV (79 aa)) enclose the GIY-YIG domain. In terms of domain architecture, UVR spans 207-242 (DQLGEEIMHSMQQASEALEFERAARLRDLLSSLRSM).

Belongs to the UvrC family. Interacts with UvrB in an incision complex.

It localises to the cytoplasm. Functionally, the UvrABC repair system catalyzes the recognition and processing of DNA lesions. UvrC both incises the 5' and 3' sides of the lesion. The N-terminal half is responsible for the 3' incision and the C-terminal half is responsible for the 5' incision. The polypeptide is UvrABC system protein C (Xanthomonas euvesicatoria pv. vesicatoria (strain 85-10) (Xanthomonas campestris pv. vesicatoria)).